The sequence spans 529 residues: MFVWTHINKYTSRYINRYILKFTRYESLRLCMLNFTSTIKNENKIYSKKNFNNVLMQNIKITEDEEIICEQFFFSKYNLPYVLKIPFSDLRLIDTCNNNHNPTILIRKDMILLRTGFLSCVIRYNELWLFEPREPLVIKATNLIKQNLKIIYGFKGDMSSGVEIPLNELKDEKCQENVNMYEKNIRNDLYSTYEKNISDDINDAKQKNMCSDINNIWSNHIKIDKKRIISGNYSRLNRNNIWENDREINKKDIFNIKEKKNMNENDDICNKIKIVGKEELNNNIKEDINYLNVENNFYRYKGNISFEFLCLDICMQLSIKEYENYLDTINITLRQKIQLQQKKEENIEINMLTNNLLREMMKIKNKLQKLSNLLNALRSNIEKILKNETDMKNMYLTTLNKISINKIKDYSDLEILLETHLQLTDELSGELENMEEKITHYEELMRLNLDYNRNKFILLNAKISFSTLFCSICAVITSLFGMNLKNFIEHNDYAFFIVSIFITSWSIVGIYFTKNINTLLRFFDKYNVK.

Coiled-coil stretches lie at residues 336 to 388 (KIQL…LKNE) and 416 to 450 (LLET…LNLD). Residues 456-476 (FILLNAKISFSTLFCSICAVI) form a helical membrane-spanning segment. Residues 477–492 (TSLFGMNLKNFIEHND) lie on the Mitochondrial intermembrane side of the membrane. A helical transmembrane segment spans residues 493–513 (YAFFIVSIFITSWSIVGIYFT). At 514-529 (KNINTLLRFFDKYNVK) the chain is on the mitochondrial matrix side.

Belongs to the CorA metal ion transporter (MIT) (TC 1.A.35) family.

It is found in the mitochondrion inner membrane. Its function is as follows. Mitochondrial inner membrane magnesium transporter required for mitochondrial magnesium homeostasis. Involved in the development of the sporozoite in the mosquito vector midgut. In Plasmodium falciparum (isolate 3D7), this protein is Mitochondrial inner membrane magnesium transporter MIT1.